The primary structure comprises 509 residues: Lysine--tRNA ligase (509 aa).

Residues glutamate 418 and glutamate 425 each coordinate Mg(2+).

Belongs to the class-II aminoacyl-tRNA synthetase family. Homodimer. The cofactor is Mg(2+).

The protein resides in the cytoplasm. The catalysed reaction is tRNA(Lys) + L-lysine + ATP = L-lysyl-tRNA(Lys) + AMP + diphosphate. The protein is Lysine--tRNA ligase of Acinetobacter baumannii (strain ATCC 17978 / DSM 105126 / CIP 53.77 / LMG 1025 / NCDC KC755 / 5377).